Consider the following 206-residue polypeptide: Recombination protein RecR (206 aa).

The segment at 58–73 adopts a C4-type zinc-finger fold; the sequence is CENCHNISDTKVCEIC. Residues 81-176 form the Toprim domain; it reads QTICVVEDIR…IISTIARGIS (96 aa).

Belongs to the RecR family.

Functionally, may play a role in DNA repair. It seems to be involved in an RecBC-independent recombinational process of DNA repair. It may act with RecF and RecO. The chain is Recombination protein RecR from Flavobacterium johnsoniae (strain ATCC 17061 / DSM 2064 / JCM 8514 / BCRC 14874 / CCUG 350202 / NBRC 14942 / NCIMB 11054 / UW101) (Cytophaga johnsonae).